Consider the following 141-residue polypeptide: NADH dehydrogenase [ubiquinone] 1 alpha subcomplex subunit 11 (141 aa).

Residue Ala-2 is modified to N-acetylalanine. 2 helical membrane passes run 22-43 (TYAT…SVAL) and 58-80 (RYTF…SAQV).

Complex I is composed of 45 different subunits.

It is found in the mitochondrion inner membrane. Its function is as follows. Accessory subunit of the mitochondrial membrane respiratory chain NADH dehydrogenase (Complex I), that is believed not to be involved in catalysis. Complex I functions in the transfer of electrons from NADH to the respiratory chain. The immediate electron acceptor for the enzyme is believed to be ubiquinone. The polypeptide is NADH dehydrogenase [ubiquinone] 1 alpha subcomplex subunit 11 (NDUFA11) (Bos taurus (Bovine)).